The sequence spans 1162 residues: Carbamoyl phosphate synthase large chain (1162 aa).

Residues 1–456 (MPKRTDIKSI…SLQKALRGLE (456 aa)) form a carboxyphosphate synthetic domain region. ATP is bound by residues R129, R222, G228, G229, E261, V263, E268, G294, V295, H296, Q338, and E352. One can recognise an ATP-grasp 1 domain in the interval 186 to 381 (ETEWQLGEVE…IAKVAAKLAV (196 aa)). Mg(2+) contacts are provided by Q338, E352, and N354. Residues Q338, E352, and N354 each contribute to the Mn(2+) site. The interval 457–613 (TGLTGFDEIA…PFVGQPRSEA (157 aa)) is oligomerization domain. The carbamoyl phosphate synthetic domain stretch occupies residues 614 to 1025 (EVSDRKKVVI…AFAKAQLGAG (412 aa)). The ATP-grasp 2 domain occupies 742-954 (QKLLIKLDLN…IAKVAARIMA (213 aa)). ATP contacts are provided by R778, T838, L840, E845, G870, I871, H872, S873, Q913, and E925. Mg(2+) contacts are provided by Q913, E925, and N927. Residues Q913, E925, and N927 each coordinate Mn(2+). The region spanning 1026 to 1162 (VELPREGTVF…VRPLQDYFRS (137 aa)) is the MGS-like domain. The tract at residues 1026 to 1162 (VELPREGTVF…VRPLQDYFRS (137 aa)) is allosteric domain.

Belongs to the CarB family. Composed of two chains; the small (or glutamine) chain promotes the hydrolysis of glutamine to ammonia, which is used by the large (or ammonia) chain to synthesize carbamoyl phosphate. Tetramer of heterodimers (alpha,beta)4. Mg(2+) is required as a cofactor. It depends on Mn(2+) as a cofactor.

The enzyme catalyses hydrogencarbonate + L-glutamine + 2 ATP + H2O = carbamoyl phosphate + L-glutamate + 2 ADP + phosphate + 2 H(+). It carries out the reaction hydrogencarbonate + NH4(+) + 2 ATP = carbamoyl phosphate + 2 ADP + phosphate + 2 H(+). The protein operates within amino-acid biosynthesis; L-arginine biosynthesis; carbamoyl phosphate from bicarbonate: step 1/1. Its pathway is pyrimidine metabolism; UMP biosynthesis via de novo pathway; (S)-dihydroorotate from bicarbonate: step 1/3. Functionally, large subunit of the glutamine-dependent carbamoyl phosphate synthetase (CPSase). CPSase catalyzes the formation of carbamoyl phosphate from the ammonia moiety of glutamine, carbonate, and phosphate donated by ATP, constituting the first step of 2 biosynthetic pathways, one leading to arginine and/or urea and the other to pyrimidine nucleotides. The large subunit (synthetase) binds the substrates ammonia (free or transferred from glutamine from the small subunit), hydrogencarbonate and ATP and carries out an ATP-coupled ligase reaction, activating hydrogencarbonate by forming carboxy phosphate which reacts with ammonia to form carbamoyl phosphate. The chain is Carbamoyl phosphate synthase large chain from Brucella melitensis biotype 1 (strain ATCC 23456 / CCUG 17765 / NCTC 10094 / 16M).